The chain runs to 109 residues: MQEIERQIRMAVETGDVVLGSNQTIKLLKLGKPKLVIVAANCPAEIREDIEYYAELADVPVFVYPGTSMDLGDVCGRPHVVASMAVLDDGESDLIATVRKAMEEGAAPS.

It belongs to the eukaryotic ribosomal protein eL30 family.

This chain is Large ribosomal subunit protein eL30, found in Methanopyrus kandleri (strain AV19 / DSM 6324 / JCM 9639 / NBRC 100938).